Here is an 816-residue protein sequence, read N- to C-terminus: Phenylalanine--tRNA ligase beta subunit (816 aa).

The tRNA-binding domain maps to 40–148 (FEELAALKTG…EGMAHGQRFI (109 aa)). Residues 401-479 (KAVEVQRFSI…RIYGYDNVPT (79 aa)) form the B5 domain. Mg(2+)-binding residues include Asp457, Asp463, Glu466, and Glu467. The 94-residue stretch at 721-814 (PVYPAVKRDI…LTDRFGGSFR (94 aa)) folds into the FDX-ACB domain.

This sequence belongs to the phenylalanyl-tRNA synthetase beta subunit family. Type 1 subfamily. In terms of assembly, tetramer of two alpha and two beta subunits. Mg(2+) is required as a cofactor.

It is found in the cytoplasm. It carries out the reaction tRNA(Phe) + L-phenylalanine + ATP = L-phenylalanyl-tRNA(Phe) + AMP + diphosphate + H(+). In Desulfotalea psychrophila (strain LSv54 / DSM 12343), this protein is Phenylalanine--tRNA ligase beta subunit.